The sequence spans 357 residues: Peptide chain release factor 1 (357 aa).

The residue at position 234 (glutamine 234) is an N5-methylglutamine.

The protein belongs to the prokaryotic/mitochondrial release factor family. In terms of processing, methylated by PrmC. Methylation increases the termination efficiency of RF1.

It is found in the cytoplasm. Peptide chain release factor 1 directs the termination of translation in response to the peptide chain termination codons UAG and UAA. The sequence is that of Peptide chain release factor 1 from Chlorobaculum tepidum (strain ATCC 49652 / DSM 12025 / NBRC 103806 / TLS) (Chlorobium tepidum).